The chain runs to 402 residues: Phosphoglycerate kinase (402 aa).

Substrate is bound by residues 29–31, R45, 69–72, R125, and R158; these read DFN and HLGR. Residues K209, E331, and 357 to 360 contribute to the ATP site; that span reads GGDT.

The protein belongs to the phosphoglycerate kinase family.

The protein localises to the cytoplasm. It catalyses the reaction (2R)-3-phosphoglycerate + ATP = (2R)-3-phospho-glyceroyl phosphate + ADP. Its pathway is carbohydrate degradation; glycolysis; pyruvate from D-glyceraldehyde 3-phosphate: step 2/5. This is Phosphoglycerate kinase (pgk) from Helicobacter pylori (strain J99 / ATCC 700824) (Campylobacter pylori J99).